Here is a 291-residue protein sequence, read N- to C-terminus: ATP phosphoribosyltransferase 1 (291 aa).

It belongs to the ATP phosphoribosyltransferase family. Long subfamily. Mg(2+) serves as cofactor.

The protein resides in the cytoplasm. The catalysed reaction is 1-(5-phospho-beta-D-ribosyl)-ATP + diphosphate = 5-phospho-alpha-D-ribose 1-diphosphate + ATP. The protein operates within amino-acid biosynthesis; L-histidine biosynthesis; L-histidine from 5-phospho-alpha-D-ribose 1-diphosphate: step 1/9. Its activity is regulated as follows. Feedback inhibited by histidine. Its function is as follows. Catalyzes the condensation of ATP and 5-phosphoribose 1-diphosphate to form N'-(5'-phosphoribosyl)-ATP (PR-ATP). Has a crucial role in the pathway because the rate of histidine biosynthesis seems to be controlled primarily by regulation of HisG enzymatic activity. The protein is ATP phosphoribosyltransferase 1 of Geobacter sulfurreducens (strain ATCC 51573 / DSM 12127 / PCA).